The primary structure comprises 305 residues: Ornithine carbamoyltransferase (305 aa).

Residues 54 to 57, Gln-81, Arg-105, and 132 to 135 contribute to the carbamoyl phosphate site; these read STRT and HPCQ. L-ornithine is bound by residues Asn-163, Asp-223, and 227–228; that span reads SM. Carbamoyl phosphate-binding positions include 262 to 263 and Arg-290; that span reads CL.

This sequence belongs to the aspartate/ornithine carbamoyltransferase superfamily. OTCase family.

Its subcellular location is the cytoplasm. The enzyme catalyses carbamoyl phosphate + L-ornithine = L-citrulline + phosphate + H(+). It participates in amino-acid biosynthesis; L-arginine biosynthesis; L-arginine from L-ornithine and carbamoyl phosphate: step 1/3. Reversibly catalyzes the transfer of the carbamoyl group from carbamoyl phosphate (CP) to the N(epsilon) atom of ornithine (ORN) to produce L-citrulline. This is Ornithine carbamoyltransferase from Agrobacterium fabrum (strain C58 / ATCC 33970) (Agrobacterium tumefaciens (strain C58)).